The sequence spans 411 residues: Arginine deiminase 1 (411 aa).

Catalysis depends on C401, which acts as the Amidino-cysteine intermediate.

The protein belongs to the arginine deiminase family.

It is found in the cytoplasm. The catalysed reaction is L-arginine + H2O = L-citrulline + NH4(+). It participates in amino-acid degradation; L-arginine degradation via ADI pathway; carbamoyl phosphate from L-arginine: step 1/2. This Staphylococcus epidermidis (strain ATCC 12228 / FDA PCI 1200) protein is Arginine deiminase 1 (arcA1).